We begin with the raw amino-acid sequence, 337 residues long: Probable E3 ubiquitin-protein ligase LUL1 (337 aa).

Gly-2 is lipidated: N-myristoyl glycine. The segment at 139 to 255 is DAR2 domain; it reads FTFDASMPGR…GEIKIEVVKQ (117 aa). Residues 285–324 form an RING-type; atypical zinc finger; that stretch reads CVVCLSEPRDTTVLPCRHMCMCSGCAKALRFQTNLCPVCR.

The protein belongs to the RING-type zinc finger family. LOG2 subfamily. In terms of processing, myristoylated (in vitro).

The enzyme catalyses S-ubiquitinyl-[E2 ubiquitin-conjugating enzyme]-L-cysteine + [acceptor protein]-L-lysine = [E2 ubiquitin-conjugating enzyme]-L-cysteine + N(6)-ubiquitinyl-[acceptor protein]-L-lysine.. It participates in protein modification; protein ubiquitination. In terms of biological role, acts as an E3 ubiquitin-protein ligase, or as part of E3 complex, which accepts ubiquitin from specific E2 ubiquitin-conjugating enzymes and then transfers it to substrates (in vitro). The polypeptide is Probable E3 ubiquitin-protein ligase LUL1 (LUL1) (Arabidopsis thaliana (Mouse-ear cress)).